A 122-amino-acid polypeptide reads, in one-letter code: Large ribosomal subunit protein uL14 (122 aa).

This sequence belongs to the universal ribosomal protein uL14 family. As to quaternary structure, part of the 50S ribosomal subunit. Forms a cluster with proteins L3 and L19. In the 70S ribosome, L14 and L19 interact and together make contacts with the 16S rRNA in bridges B5 and B8.

Its function is as follows. Binds to 23S rRNA. Forms part of two intersubunit bridges in the 70S ribosome. The chain is Large ribosomal subunit protein uL14 from Pseudoalteromonas translucida (strain TAC 125).